A 255-amino-acid polypeptide reads, in one-letter code: MEILPAIDLLDGACVRLHKGDYEQVTRFSDDPVAQALSWQQQGATRLHLVDLDGAKRGEPVNDSAVQAITSALDIPVQLGGGVRSLERAEQLLACGLDRVILGTVAIEQPDLVRSLAERYPGRIVVGIDAKDGRVATRGWIEQSDVLATDLARTFSSSGIAAIITTDIATDGTLAGPNLEALRTMAASSSVPVIASGGIGCMADLLSLLPLEPLGVSGVIVGRALYDGRVDLAEAVRALAEPRLQDITAVAADLA.

The active-site Proton acceptor is the Asp-8. The active-site Proton donor is the Asp-129.

This sequence belongs to the HisA/HisF family.

The protein localises to the cytoplasm. The enzyme catalyses 1-(5-phospho-beta-D-ribosyl)-5-[(5-phospho-beta-D-ribosylamino)methylideneamino]imidazole-4-carboxamide = 5-[(5-phospho-1-deoxy-D-ribulos-1-ylimino)methylamino]-1-(5-phospho-beta-D-ribosyl)imidazole-4-carboxamide. It participates in amino-acid biosynthesis; L-histidine biosynthesis; L-histidine from 5-phospho-alpha-D-ribose 1-diphosphate: step 4/9. The chain is 1-(5-phosphoribosyl)-5-[(5-phosphoribosylamino)methylideneamino] imidazole-4-carboxamide isomerase from Parasynechococcus marenigrum (strain WH8102).